We begin with the raw amino-acid sequence, 281 residues long: 2-dehydro-3-deoxyphosphooctonate aldolase (281 aa).

Belongs to the KdsA family.

It is found in the cytoplasm. It catalyses the reaction D-arabinose 5-phosphate + phosphoenolpyruvate + H2O = 3-deoxy-alpha-D-manno-2-octulosonate-8-phosphate + phosphate. The protein operates within carbohydrate biosynthesis; 3-deoxy-D-manno-octulosonate biosynthesis; 3-deoxy-D-manno-octulosonate from D-ribulose 5-phosphate: step 2/3. It participates in bacterial outer membrane biogenesis; lipopolysaccharide biosynthesis. This is 2-dehydro-3-deoxyphosphooctonate aldolase from Pseudomonas fluorescens (strain Pf0-1).